We begin with the raw amino-acid sequence, 766 residues long: Single-minded homolog 1 (766 aa).

In terms of domain architecture, bHLH spans 1–53 (MKEKSKNAARTRREKENSEFYELAKLLPLPSAITSQLDKASIIRLTTSYLKMR). PAS domains are found at residues 77–147 (GREL…QPYH) and 218–288 (PPSA…LVKG). The PAC domain maps to 292-335 (TKYYRFLAKHGGWVWVQSYATIVHNSRSSRPHCIVSVNYVLTDT). The Single-minded C-terminal domain occupies 336-766 (EYKGLQLSLD…GTSVIITNGS (431 aa)). A compositionally biased stretch (polar residues) spans 353-365 (AFSYTSSSTPTMT). Disordered regions lie at residues 353 to 431 (AFSY…SQHD) and 528 to 563 (WDEDSVVSSPDPGSASESGDRYRTEQYQSSPHEPSK). Positions 368–387 (RKGAKSRLSSSKSKSRTSPY) match the Nuclear localization signal motif. Low complexity predominate over residues 373–385 (SRLSSSKSKSRTS). Residues 394-404 (HTERSESDHDS) show a composition bias toward basic and acidic residues.

Efficient DNA binding requires dimerization with another bHLH protein. Heterodimer; forms a heterodimer with ARNT, ARNT2.

It is found in the nucleus. In terms of biological role, transcriptional factor that may have pleiotropic effects during embryogenesis and in the adult. This chain is Single-minded homolog 1 (SIM1), found in Homo sapiens (Human).